The following is a 1303-amino-acid chain: Serine/threonine-protein kinase ULK4 (1303 aa).

The region spanning 4 to 280 (FVLYEEIGRG…WEGVLQHPFW (277 aa)) is the Protein kinase domain. The active-site Proton acceptor is the Asp121. Disordered regions lie at residues 304–332 (ECSG…AHRL) and 369–401 (TSAM…GHLS). The span at 384–400 (SSPQKTSPLSKMTSGHL) shows a compositional bias: polar residues. HEAT repeat units follow at residues 504 to 543 (RLLH…HTTE), 727 to 765 (LIQE…HNRD), 796 to 834 (NEYL…RKHP), 926 to 964 (STVM…LLVS), 1025 to 1063 (LVEE…NLVA), 1105 to 1143 (STLL…DTQA), and 1151 to 1189 (SKPL…LYGG).

The protein belongs to the protein kinase superfamily. Ser/Thr protein kinase family. APG1/unc-51/ULK1 subfamily. As to expression, expressed in embryonic and adult brain. In the brain, widely expressed, with highest levels in layers II/III and V of the cortex, piriform cortex, CA1-3 of hippocampus, dentate gyrus, ependymal cells lining the ventricles and choroid plexus, and in the thalamic reticular nucleus (at protein level).

The enzyme catalyses L-seryl-[protein] + ATP = O-phospho-L-seryl-[protein] + ADP + H(+). It catalyses the reaction L-threonyl-[protein] + ATP = O-phospho-L-threonyl-[protein] + ADP + H(+). Its function is as follows. May be involved in the remodeling of cytoskeletal components, such as alpha-tubulin, and in this way regulates neurite branching and elongation, as well as cell motility. The chain is Serine/threonine-protein kinase ULK4 (Ulk4) from Mus musculus (Mouse).